We begin with the raw amino-acid sequence, 484 residues long: FAD-dependent monooxygenase aurC (484 aa).

A signal peptide spans 1–21; it reads MGAYSFRVIIVGGSITGMTLA. Positions 35, 49, and 108 each coordinate FAD. Residue Y216 is part of the active site. 2 residues coordinate FAD: D308 and G321. A helical membrane pass occupies residues 451–471; that stretch reads FAVASLIVLIVVLARALDSPA.

It belongs to the paxM FAD-dependent monooxygenase family. Requires FAD as cofactor.

The protein resides in the membrane. It functions in the pathway polyketide biosynthesis. In terms of biological role, FAD-dependent monooxygenase; part of the gene cluster that mediates the biosynthesis of aurovertins, fungal polyketides that exhibit potent inhibition of adenosine triphosphate synthase. Tha biosynthesis starts with the HR-PKS aurA that selects propionate as the starter unit; synthesizes a hexa-ene chain through the repeated functions of the KR and DH domains in the first six iterations; selectively introduces three alpha-methyl substitutions at C4, C6, and C16 using the S-adensylmethionine-dependent cMET; and shuts off KR and DH in the last three iterations to afford a 1,3,5-triketo portion that can undergo intramolecular cyclization to yield the alpha-pyrone intermediate. AurE may act as a cyclase and enhances the rate of pyrone formation and product release of aurA. The methyltransferase aurB then methylates the C17 hydroxyl group. C17 methylation is required to initiate epoxidation by the downstream monooxygenase aurC. The monooxygenase aurC and the epoxide hydrolase aurD can iteratively transform the terminal triene portion of the methylated precursor into the dioxabicyclo[3.2.1]octane scaffold of aurovertin E. Epoxidation modifications of the precursor occur in two separate steps; bis-epoxidation of the two terminal olefins takes place first, followed by another epoxidation that occurs at C7-C8 after tetrahydrofuran formation. The O-acyltransferase aurG converts aurovertin E to aurovertin A. The polypeptide is FAD-dependent monooxygenase aurC (Calcarisporium arbuscula (Dendryphion arbuscula)).